Reading from the N-terminus, the 130-residue chain is Ribonuclease VapC4 (130 aa).

Residues 7 to 130 (LADTSVFIGI…AMPDVEVITI (124 aa)) enclose the PINc domain. Asp-9 and Asp-98 together coordinate Mg(2+).

This sequence belongs to the PINc/VapC protein family. In terms of assembly, interacts with cognate antitoxin VapB4. It depends on Mg(2+) as a cofactor.

Its subcellular location is the secreted. Toxic component of a type II toxin-antitoxin (TA) system. Probably exerts its toxic effect by binding to mRNA, inhibiting translation. Binds to, recognizes and cleaves ssRNA at ACGC and AC(A/U)GC sequences, usually between the G and C; cleavage is not very efficient, nor is cleavage required to inhibit protein synthesis. Upon expression in situ, in M.smegmatis or E.coli inhibits cell growth and colony formation; in at least E.coli also causes increased levels of cellular RNA. Its toxic effect is neutralized by coexpression with cognate antitoxin VapB4. The protein is Ribonuclease VapC4 of Mycobacterium tuberculosis (strain ATCC 25618 / H37Rv).